Reading from the N-terminus, the 209-residue chain is Uracil phosphoribosyltransferase (209 aa).

5-phospho-alpha-D-ribose 1-diphosphate-binding positions include R79, R104, and 131 to 139; that span reads DPMLATGGS. Residues I194 and 199 to 201 each bind uracil; that span reads GDA. A 5-phospho-alpha-D-ribose 1-diphosphate-binding site is contributed by D200.

It belongs to the UPRTase family. Mg(2+) serves as cofactor.

It carries out the reaction UMP + diphosphate = 5-phospho-alpha-D-ribose 1-diphosphate + uracil. It participates in pyrimidine metabolism; UMP biosynthesis via salvage pathway; UMP from uracil: step 1/1. Allosterically activated by GTP. Functionally, catalyzes the conversion of uracil and 5-phospho-alpha-D-ribose 1-diphosphate (PRPP) to UMP and diphosphate. The sequence is that of Uracil phosphoribosyltransferase from Streptococcus thermophilus (strain CNRZ 1066).